Reading from the N-terminus, the 97-residue chain is Small ribosomal subunit protein bS20 (97 aa).

This sequence belongs to the bacterial ribosomal protein bS20 family.

In terms of biological role, binds directly to 16S ribosomal RNA. In Prochlorococcus marinus (strain MIT 9515), this protein is Small ribosomal subunit protein bS20.